A 416-amino-acid polypeptide reads, in one-letter code: Multifunctional CCA protein (416 aa).

Residues Gly-8 and Arg-11 each contribute to the ATP site. CTP-binding residues include Gly-8 and Arg-11. Residues Asp-21 and Asp-23 each contribute to the Mg(2+) site. The ATP site is built by Arg-91, Arg-138, and Arg-141. Arg-91, Arg-138, and Arg-141 together coordinate CTP. Positions 229 to 331 constitute an HD domain; sequence TGLHQELVSD…YELLQRCDAF (103 aa).

This sequence belongs to the tRNA nucleotidyltransferase/poly(A) polymerase family. Bacterial CCA-adding enzyme type 1 subfamily. In terms of assembly, monomer. Can also form homodimers and oligomers. It depends on Mg(2+) as a cofactor. Requires Ni(2+) as cofactor.

The catalysed reaction is a tRNA precursor + 2 CTP + ATP = a tRNA with a 3' CCA end + 3 diphosphate. It catalyses the reaction a tRNA with a 3' CCA end + 2 CTP + ATP = a tRNA with a 3' CCACCA end + 3 diphosphate. In terms of biological role, catalyzes the addition and repair of the essential 3'-terminal CCA sequence in tRNAs without using a nucleic acid template. Adds these three nucleotides in the order of C, C, and A to the tRNA nucleotide-73, using CTP and ATP as substrates and producing inorganic pyrophosphate. tRNA 3'-terminal CCA addition is required both for tRNA processing and repair. Also involved in tRNA surveillance by mediating tandem CCA addition to generate a CCACCA at the 3' terminus of unstable tRNAs. While stable tRNAs receive only 3'-terminal CCA, unstable tRNAs are marked with CCACCA and rapidly degraded. This is Multifunctional CCA protein from Xylella fastidiosa (strain M23).